A 509-amino-acid chain; its full sequence is Maturase K (509 aa).

The protein belongs to the intron maturase 2 family. MatK subfamily.

Its subcellular location is the plastid. Usually encoded in the trnK tRNA gene intron. Probably assists in splicing its own and other chloroplast group II introns. The sequence is that of Maturase K from Cuscuta reflexa (Southern Asian dodder).